Consider the following 392-residue polypeptide: 5-amino-6-(D-ribitylamino)uracil--L-tyrosine 4-hydroxyphenyl transferase (392 aa).

The 248-residue stretch at V60–K307 folds into the Radical SAM core domain. Residues C74, C78, and C81 each coordinate [4Fe-4S] cluster.

It belongs to the radical SAM superfamily. CofH family. Consists of two subunits, CofG and CofH. Requires [4Fe-4S] cluster as cofactor.

The enzyme catalyses 5-amino-6-(D-ribitylamino)uracil + L-tyrosine + S-adenosyl-L-methionine = 5-amino-5-(4-hydroxybenzyl)-6-(D-ribitylimino)-5,6-dihydrouracil + 2-iminoacetate + 5'-deoxyadenosine + L-methionine + H(+). It participates in cofactor biosynthesis; coenzyme F0 biosynthesis. Its function is as follows. Catalyzes the radical-mediated synthesis of 5-amino-5-(4-hydroxybenzyl)-6-(D-ribitylimino)-5,6-dihydrouracil from 5-amino-6-(D-ribitylamino)uracil and L-tyrosine. This chain is 5-amino-6-(D-ribitylamino)uracil--L-tyrosine 4-hydroxyphenyl transferase, found in Synechocystis sp. (strain ATCC 27184 / PCC 6803 / Kazusa).